Here is a 350-residue protein sequence, read N- to C-terminus: Deoxyribonuclease-2-alpha (350 aa).

Residues 1-19 (MAAPSSLLLAALLWVPAEA) form the signal peptide. A disulfide bridge links Cys-22 with Cys-162. N-linked (GlcNAc...) asparagine glycans are attached at residues Asn-89, Asn-215, Asn-269, and Asn-293. Intrachain disulfides connect Cys-270/Cys-350 and Cys-311/Cys-330. His-298 is a catalytic residue.

Belongs to the DNase II family. As to expression, ubiquitous.

It localises to the lysosome. It carries out the reaction Endonucleolytic cleavage to nucleoside 3'-phosphates and 3'-phosphooligonucleotide end-products.. Its function is as follows. Hydrolyzes DNA under acidic conditions with a preference for double-stranded DNA. Plays a major role in the clearance of nucleic acids generated through apoptosis, hence preventing autoinflammation. Necessary for proper fetal development and for definitive erythropoiesis in fetal liver and bone marrow, where it degrades nuclear DNA expelled from erythroid precursor cells. The sequence is that of Deoxyribonuclease-2-alpha (Dnase2) from Rattus norvegicus (Rat).